Consider the following 214-residue polypeptide: Phosphoenolpyruvate guanylyltransferase 2 (214 aa).

Phosphoenolpyruvate contacts are provided by threonine 135, glycine 150, and serine 153.

This sequence belongs to the CofC family.

The catalysed reaction is phosphoenolpyruvate + GTP + H(+) = enolpyruvoyl-2-diphospho-5'-guanosine + diphosphate. Its pathway is cofactor biosynthesis; coenzyme F420 biosynthesis. Functionally, guanylyltransferase that catalyzes the activation of phosphoenolpyruvate (PEP) as enolpyruvoyl-2-diphospho-5'-guanosine, via the condensation of PEP with GTP. It is involved in the biosynthesis of coenzyme F420, a hydride carrier cofactor. The sequence is that of Phosphoenolpyruvate guanylyltransferase 2 from Rhodococcus jostii (strain RHA1).